The sequence spans 205 residues: Peptidyl-tRNA hydrolase (205 aa).

Tyrosine 14 is a tRNA binding site. Catalysis depends on histidine 19, which acts as the Proton acceptor. Positions 64, 66, and 112 each coordinate tRNA.

This sequence belongs to the PTH family. As to quaternary structure, monomer.

It localises to the cytoplasm. It catalyses the reaction an N-acyl-L-alpha-aminoacyl-tRNA + H2O = an N-acyl-L-amino acid + a tRNA + H(+). Functionally, hydrolyzes ribosome-free peptidyl-tRNAs (with 1 or more amino acids incorporated), which drop off the ribosome during protein synthesis, or as a result of ribosome stalling. Catalyzes the release of premature peptidyl moieties from peptidyl-tRNA molecules trapped in stalled 50S ribosomal subunits, and thus maintains levels of free tRNAs and 50S ribosomes. The chain is Peptidyl-tRNA hydrolase from Parvibaculum lavamentivorans (strain DS-1 / DSM 13023 / NCIMB 13966).